The chain runs to 207 residues: Nuclear transcription factor Y subunit beta (207 aa).

The a domain stretch occupies residues 1–52 (MTMDGDSSTTDASQLGISADYIGGSHYVIQPHDDTEDSMNDHEDTNGSKESF). Residues 27-52 (YVIQPHDDTEDSMNDHEDTNGSKESF) form a disordered region. Basic and acidic residues predominate over residues 39 to 52 (MNDHEDTNGSKESF). Residues 53–142 (REQDIYLPIA…PLKLYLQKFR (90 aa)) are b domain. Residues 59–65 (LPIANVA) mediate DNA binding. The tract at residues 86–97 (VQECVSEFISFI) is subunit association domain (SAD). A Glycyl lysine isopeptide (Lys-Gly) (interchain with G-Cter in ubiquitin) cross-link involves residue Lys-140. Positions 143 to 207 (EAMKGEKGIG…ISGVQQIQFS (65 aa)) are c domain.

The protein belongs to the NFYB/HAP3 subunit family. As to quaternary structure, heterotrimeric transcription factor composed of three components, NF-YA, NF-YB and NF-YC. NF-YB and NF-YC must interact and dimerize for NF-YA association and DNA binding. Interacts with C1QBP. Monoubiquitination at Lys-140 plays an important role in transcriptional activation by allowing the deposition of histone H3 methylations as well as histone H2B monoubiquitination at 'Lys-121'.

The protein resides in the nucleus. Component of the sequence-specific heterotrimeric transcription factor (NF-Y) which specifically recognizes a 5'-CCAAT-3' box motif found in the promoters of its target genes. NF-Y can function as both an activator and a repressor, depending on its interacting cofactors. The polypeptide is Nuclear transcription factor Y subunit beta (NFYB) (Equus caballus (Horse)).